Reading from the N-terminus, the 972-residue chain is SWI/SNF-related matrix-associated actin-dependent regulator of chromatin subfamily A containing DEAD/H box 1A (972 aa).

Disordered stretches follow at residues 15–76 (NAVG…SDLQ), 125–177 (DEDS…EKQE), and 217–333 (SSTD…EDSI). Basic and acidic residues-rich tracts occupy residues 22-42 (KSPD…RKAD) and 63-72 (EVVRMGKDSA). In terms of domain architecture, CUE 1 spans 82–127 (DMEDKIIKLLEIFPQKSKKDLLEVIENTSTLDGAVAHCLMIYGDED). A compositionally biased stretch (basic and acidic residues) spans 128–138 (SGGRKDKGGRS). The segment covering 156–169 (SESEDEDSEDEESE) has biased composition (acidic residues). The 44-residue stretch at 175 to 218 (KQEALLKKLKRKLPDIEKEVLRDILKEHDWDYENALGSLLVFSS) folds into the CUE 2 domain. Residues 237 to 246 (HSKEKTDKIT) show a composition bias toward basic and acidic residues. Polar residues predominate over residues 247 to 263 (QRPSGSSSLSRWLTAAS). A compositionally biased stretch (low complexity) spans 279–290 (KSALSKSTSKNS). A compositionally biased stretch (acidic residues) spans 307-332 (ASEDEDEIDSDVDSMSDDQDSEDEDS). The region spanning 460–628 (ILLHQHKLSG…MSLLNFIMPS (169 aa)) is the Helicase ATP-binding domain. Position 473-480 (473-480 (DEMGLGKT)) interacts with ATP. The DEGH box signature appears at 579 to 582 (DEGH). Residues 805–966 (LLTKTLAKLK…AITEQMAELL (162 aa)) enclose the Helicase C-terminal domain.

This sequence belongs to the SNF2/RAD54 helicase family.

The protein localises to the nucleus. It is found in the chromosome. The catalysed reaction is ATP + H2O = ADP + phosphate + H(+). DNA helicase that possesses intrinsic ATP-dependent nucleosome-remodeling activity and is both required for DNA repair and heterochromatin organization. Promotes DNA end resection of double-strand breaks (DSBs) following DNA damage: probably acts by weakening histone DNA interactions in nucleosomes flanking DSBs. Required for the restoration of heterochromatin organization after replication. The protein is SWI/SNF-related matrix-associated actin-dependent regulator of chromatin subfamily A containing DEAD/H box 1A (smarcad1a) of Danio rerio (Zebrafish).